Reading from the N-terminus, the 197-residue chain is Dephospho-CoA kinase (197 aa).

Positions 2–197 (IIGLTGGIGS…HTKYMELLNE (196 aa)) constitute a DPCK domain. Position 10–15 (10–15 (GSGKSA)) interacts with ATP.

Belongs to the CoaE family.

It localises to the cytoplasm. The catalysed reaction is 3'-dephospho-CoA + ATP = ADP + CoA + H(+). It functions in the pathway cofactor biosynthesis; coenzyme A biosynthesis; CoA from (R)-pantothenate: step 5/5. Catalyzes the phosphorylation of the 3'-hydroxyl group of dephosphocoenzyme A to form coenzyme A. The sequence is that of Dephospho-CoA kinase from Gamma-proteobacterium EBAC31A08.